Consider the following 421-residue polypeptide: UDP-N-acetylglucosamine 1-carboxyvinyltransferase 1 (421 aa).

22-23 (KN) lines the phosphoenolpyruvate pocket. Residue Arg95 participates in UDP-N-acetyl-alpha-D-glucosamine binding. The active-site Proton donor is Cys119. The residue at position 119 (Cys119) is a 2-(S-cysteinyl)pyruvic acid O-phosphothioketal. UDP-N-acetyl-alpha-D-glucosamine-binding positions include 124 to 128 (RPIEQ), Asp308, and Val330.

The protein belongs to the EPSP synthase family. MurA subfamily.

The protein resides in the cytoplasm. It carries out the reaction phosphoenolpyruvate + UDP-N-acetyl-alpha-D-glucosamine = UDP-N-acetyl-3-O-(1-carboxyvinyl)-alpha-D-glucosamine + phosphate. It participates in cell wall biogenesis; peptidoglycan biosynthesis. Cell wall formation. Adds enolpyruvyl to UDP-N-acetylglucosamine. This is UDP-N-acetylglucosamine 1-carboxyvinyltransferase 1 from Staphylococcus aureus (strain MW2).